Reading from the N-terminus, the 628-residue chain is Chaperone protein DnaK (628 aa).

T195 carries the post-translational modification Phosphothreonine; by autocatalysis. The tract at residues 545–628 (QLEENEGAAQ…VIDADFKAAE (84 aa)) is disordered. The span at 555–591 (DAKDALKAAADEAEEAVRSEDDARIESAQKRLEEELR) shows a compositional bias: basic and acidic residues. Over residues 596-612 (AQQAAGQGQPQGAQAQG) the composition is skewed to low complexity. Over residues 614–628 (KADDDVIDADFKAAE) the composition is skewed to basic and acidic residues.

The protein belongs to the heat shock protein 70 family.

Acts as a chaperone. The protein is Chaperone protein DnaK of Deinococcus deserti (strain DSM 17065 / CIP 109153 / LMG 22923 / VCD115).